Consider the following 102-residue polypeptide: Small ribosomal subunit protein uS10 (102 aa).

Belongs to the universal ribosomal protein uS10 family. Part of the 30S ribosomal subunit.

In terms of biological role, involved in the binding of tRNA to the ribosomes. The polypeptide is Small ribosomal subunit protein uS10 (Lactobacillus gasseri (strain ATCC 33323 / DSM 20243 / BCRC 14619 / CIP 102991 / JCM 1131 / KCTC 3163 / NCIMB 11718 / NCTC 13722 / AM63)).